The chain runs to 307 residues: D-alanine--D-alanine ligase (307 aa).

The ATP-grasp domain occupies 104–301 (RTAFLAAGLP…FVSLCRWMVE (198 aa)). 130–183 (PLPRPFVIKPANEGSAVGVHILHEGDNRRTEIARSWSFGGQALVEEYIPGRELT) provides a ligand contact to ATP. Residues Asp251, Glu268, and Asn270 each coordinate Mg(2+).

This sequence belongs to the D-alanine--D-alanine ligase family. Requires Mg(2+) as cofactor. It depends on Mn(2+) as a cofactor.

It localises to the cytoplasm. The enzyme catalyses 2 D-alanine + ATP = D-alanyl-D-alanine + ADP + phosphate + H(+). It participates in cell wall biogenesis; peptidoglycan biosynthesis. Functionally, cell wall formation. The protein is D-alanine--D-alanine ligase of Granulibacter bethesdensis (strain ATCC BAA-1260 / CGDNIH1).